The chain runs to 400 residues: Queuine tRNA-ribosyltransferase catalytic subunit (400 aa).

Residue aspartate 89 is the Proton acceptor of the active site. Substrate-binding positions include 89 to 93, aspartate 143, glutamine 185, and glycine 212; that span reads DSGGF. An RNA binding region spans residues 243–249; it reads GVGFPVD. Aspartate 262 acts as the Nucleophile in catalysis. The tract at residues 267-271 is RNA binding; important for wobble base 34 recognition; it reads TRTAR. Positions 301, 303, 306, and 331 each coordinate Zn(2+).

It belongs to the queuine tRNA-ribosyltransferase family. As to quaternary structure, heterodimer of a catalytic subunit and an accessory subunit. Requires Zn(2+) as cofactor.

The protein localises to the cytoplasm. The catalysed reaction is guanosine(34) in tRNA + queuine = queuosine(34) in tRNA + guanine. In terms of biological role, catalytic subunit of the queuine tRNA-ribosyltransferase (TGT) that catalyzes the base-exchange of a guanine (G) residue with queuine (Q) at position 34 (anticodon wobble position) in tRNAs with GU(N) anticodons (tRNA-Asp, -Asn, -His and -Tyr), resulting in the hypermodified nucleoside queuosine (7-(((4,5-cis-dihydroxy-2-cyclopenten-1-yl)amino)methyl)-7-deazaguanosine). Catalysis occurs through a double-displacement mechanism. The nucleophile active site attacks the C1' of nucleotide 34 to detach the guanine base from the RNA, forming a covalent enzyme-RNA intermediate. The proton acceptor active site deprotonates the incoming queuine, allowing a nucleophilic attack on the C1' of the ribose to form the product. This is Queuine tRNA-ribosyltransferase catalytic subunit from Caenorhabditis elegans.